The chain runs to 392 residues: Lipid-A-disaccharide synthase (392 aa).

It belongs to the LpxB family.

The catalysed reaction is a lipid X + a UDP-2-N,3-O-bis[(3R)-3-hydroxyacyl]-alpha-D-glucosamine = a lipid A disaccharide + UDP + H(+). It participates in bacterial outer membrane biogenesis; LPS lipid A biosynthesis. Its function is as follows. Condensation of UDP-2,3-diacylglucosamine and 2,3-diacylglucosamine-1-phosphate to form lipid A disaccharide, a precursor of lipid A, a phosphorylated glycolipid that anchors the lipopolysaccharide to the outer membrane of the cell. In Bradyrhizobium diazoefficiens (strain JCM 10833 / BCRC 13528 / IAM 13628 / NBRC 14792 / USDA 110), this protein is Lipid-A-disaccharide synthase.